The sequence spans 180 residues: Large ribosomal subunit protein uL6 (180 aa).

This sequence belongs to the universal ribosomal protein uL6 family. Part of the 50S ribosomal subunit.

In terms of biological role, this protein binds to the 23S rRNA, and is important in its secondary structure. It is located near the subunit interface in the base of the L7/L12 stalk, and near the tRNA binding site of the peptidyltransferase center. The protein is Large ribosomal subunit protein uL6 of Picosynechococcus sp. (strain ATCC 27264 / PCC 7002 / PR-6) (Agmenellum quadruplicatum).